Consider the following 170-residue polypeptide: Adenine phosphoribosyltransferase (170 aa).

The protein belongs to the purine/pyrimidine phosphoribosyltransferase family. As to quaternary structure, homodimer.

It is found in the cytoplasm. It catalyses the reaction AMP + diphosphate = 5-phospho-alpha-D-ribose 1-diphosphate + adenine. Its pathway is purine metabolism; AMP biosynthesis via salvage pathway; AMP from adenine: step 1/1. Functionally, catalyzes a salvage reaction resulting in the formation of AMP, that is energically less costly than de novo synthesis. The protein is Adenine phosphoribosyltransferase of Prochlorococcus marinus (strain MIT 9312).